The primary structure comprises 373 residues: NAD(P)H-quinone oxidoreductase subunit 1 (373 aa).

Transmembrane regions (helical) follow at residues 28 to 48, 98 to 118, 129 to 149, 167 to 187, 205 to 225, 267 to 287, 309 to 329, and 348 to 368; these read LLWL…GVLV, LLFT…WLII, VGVG…GLLM, AAQS…IVMM, ILSW…ICAL, VLSA…PIPV, SVGI…AILL, and FLLP…LAFP.

Belongs to the complex I subunit 1 family. In terms of assembly, NDH-1 is composed of at least 11 different subunits.

The protein resides in the cellular thylakoid membrane. It catalyses the reaction a plastoquinone + NADH + (n+1) H(+)(in) = a plastoquinol + NAD(+) + n H(+)(out). It carries out the reaction a plastoquinone + NADPH + (n+1) H(+)(in) = a plastoquinol + NADP(+) + n H(+)(out). NDH-1 shuttles electrons from an unknown electron donor, via FMN and iron-sulfur (Fe-S) centers, to quinones in the respiratory and/or the photosynthetic chain. The immediate electron acceptor for the enzyme in this species is believed to be plastoquinone. Couples the redox reaction to proton translocation, and thus conserves the redox energy in a proton gradient. This is NAD(P)H-quinone oxidoreductase subunit 1 from Parasynechococcus marenigrum (strain WH8102).